The following is a 502-amino-acid chain: Cytochrome c-552 (502 aa).

The N-terminal stretch at 1-25 (MKYLTKSRVIATIAMLGCLSVSAWA) is a signal peptide. His-105 provides a ligand contact to heme c. Heme contacts are provided by Cys-133, Cys-136, and Lys-137. 6 residues coordinate heme c: Cys-171, Cys-174, His-175, Cys-220, Cys-223, and His-224. Residues Glu-226, Tyr-227, Lys-271, and Gln-273 each coordinate Ca(2+). Position 227 (Tyr-227) interacts with substrate. Residue His-274 participates in substrate binding. Positions 285, 292, 295, 296, 311, 324, 327, 328, and 403 each coordinate heme c. Positions 481–502 (RERGLLPEVTPKSVTTPKVDAK) are disordered.

Belongs to the cytochrome c-552 family. Ca(2+) serves as cofactor. Heme c is required as a cofactor.

It localises to the periplasm. It catalyses the reaction 6 Fe(III)-[cytochrome c] + NH4(+) + 2 H2O = 6 Fe(II)-[cytochrome c] + nitrite + 8 H(+). Its pathway is nitrogen metabolism; nitrate reduction (assimilation). Its function is as follows. Catalyzes the reduction of nitrite to ammonia, consuming six electrons in the process. The chain is Cytochrome c-552 from Haemophilus ducreyi (strain 35000HP / ATCC 700724).